The following is a 380-amino-acid chain: Tryptophan 2,3-dioxygenase (380 aa).

Substrate contacts are provided by residues Phe-57–His-61 and Arg-128. Residue His-313 participates in heme binding. Residue Thr-328 participates in substrate binding.

This sequence belongs to the tryptophan 2,3-dioxygenase family. In terms of assembly, homotetramer. Dimer of dimers. The cofactor is heme.

It carries out the reaction L-tryptophan + O2 = N-formyl-L-kynurenine. It participates in amino-acid degradation; L-tryptophan degradation via kynurenine pathway; L-kynurenine from L-tryptophan: step 1/2. It functions in the pathway pigment biosynthesis; ommochrome biosynthesis. Heme-dependent dioxygenase that catalyzes the oxidative cleavage of the L-tryptophan (L-Trp) pyrrole ring and converts L-tryptophan to N-formyl-L-kynurenine. Catalyzes the oxidative cleavage of the indole moiety. The polypeptide is Tryptophan 2,3-dioxygenase (Drosophila persimilis (Fruit fly)).